The primary structure comprises 227 residues: MALPFQLGFQDATSPIMEELLHFHDHTLMIVFMISSLVLYLISSMLTTRLTHTSTMDAQEVETIWTILPAIILITIALPSLRILYMMDEINNPSMTIKTMGHQWYWSYEYTDYSELCFDSYMIPTSDLKSGGLRLLEVDNRVVIPMEMTVRMLISSEDVLHSWAVPSLGLKTDAIPGRLNQTTLLSTRPGLYYGQCSEICGSNHSFMPIVLEMVTLNCFEKWSTSML.

Topologically, residues 1-14 are mitochondrial intermembrane; that stretch reads MALPFQLGFQDATS. Residues 15-45 form a helical membrane-spanning segment; sequence PIMEELLHFHDHTLMIVFMISSLVLYLISSM. At 46-59 the chain is on the mitochondrial matrix side; sequence LTTRLTHTSTMDAQ. A helical transmembrane segment spans residues 60–87; that stretch reads EVETIWTILPAIILITIALPSLRILYMM. At 88 to 227 the chain is on the mitochondrial intermembrane side; that stretch reads DEINNPSMTI…CFEKWSTSML (140 aa). Residues H161, C196, E198, C200, H204, and M207 each contribute to the Cu cation site. E198 contacts Mg(2+).

Belongs to the cytochrome c oxidase subunit 2 family. In terms of assembly, component of the cytochrome c oxidase (complex IV, CIV), a multisubunit enzyme composed of 14 subunits. The complex is composed of a catalytic core of 3 subunits MT-CO1, MT-CO2 and MT-CO3, encoded in the mitochondrial DNA, and 11 supernumerary subunits COX4I, COX5A, COX5B, COX6A, COX6B, COX6C, COX7A, COX7B, COX7C, COX8 and NDUFA4, which are encoded in the nuclear genome. The complex exists as a monomer or a dimer and forms supercomplexes (SCs) in the inner mitochondrial membrane with NADH-ubiquinone oxidoreductase (complex I, CI) and ubiquinol-cytochrome c oxidoreductase (cytochrome b-c1 complex, complex III, CIII), resulting in different assemblies (supercomplex SCI(1)III(2)IV(1) and megacomplex MCI(2)III(2)IV(2)). Found in a complex with TMEM177, COA6, COX18, COX20, SCO1 and SCO2. Interacts with TMEM177 in a COX20-dependent manner. Interacts with COX20. Interacts with COX16. It depends on Cu cation as a cofactor.

It localises to the mitochondrion inner membrane. It catalyses the reaction 4 Fe(II)-[cytochrome c] + O2 + 8 H(+)(in) = 4 Fe(III)-[cytochrome c] + 2 H2O + 4 H(+)(out). Component of the cytochrome c oxidase, the last enzyme in the mitochondrial electron transport chain which drives oxidative phosphorylation. The respiratory chain contains 3 multisubunit complexes succinate dehydrogenase (complex II, CII), ubiquinol-cytochrome c oxidoreductase (cytochrome b-c1 complex, complex III, CIII) and cytochrome c oxidase (complex IV, CIV), that cooperate to transfer electrons derived from NADH and succinate to molecular oxygen, creating an electrochemical gradient over the inner membrane that drives transmembrane transport and the ATP synthase. Cytochrome c oxidase is the component of the respiratory chain that catalyzes the reduction of oxygen to water. Electrons originating from reduced cytochrome c in the intermembrane space (IMS) are transferred via the dinuclear copper A center (CU(A)) of subunit 2 and heme A of subunit 1 to the active site in subunit 1, a binuclear center (BNC) formed by heme A3 and copper B (CU(B)). The BNC reduces molecular oxygen to 2 water molecules using 4 electrons from cytochrome c in the IMS and 4 protons from the mitochondrial matrix. This chain is Cytochrome c oxidase subunit 2 (MT-CO2), found in Phyllostomus hastatus (Greater spear-nosed bat).